A 276-amino-acid polypeptide reads, in one-letter code: Dermonecrotic toxin LlSicTox-alphaIV3 (276 aa).

His5 is an active-site residue. The Mg(2+) site is built by Glu25 and Asp27. The Nucleophile role is filled by His41. 2 disulfides stabilise this stretch: Cys45/Cys51 and Cys47/Cys192. Residue Asp85 coordinates Mg(2+).

It belongs to the arthropod phospholipase D family. Class II subfamily. The cofactor is Mg(2+). In terms of tissue distribution, expressed by the venom gland.

Its subcellular location is the secreted. The enzyme catalyses an N-(acyl)-sphingosylphosphocholine = an N-(acyl)-sphingosyl-1,3-cyclic phosphate + choline. It catalyses the reaction an N-(acyl)-sphingosylphosphoethanolamine = an N-(acyl)-sphingosyl-1,3-cyclic phosphate + ethanolamine. It carries out the reaction a 1-acyl-sn-glycero-3-phosphocholine = a 1-acyl-sn-glycero-2,3-cyclic phosphate + choline. The catalysed reaction is a 1-acyl-sn-glycero-3-phosphoethanolamine = a 1-acyl-sn-glycero-2,3-cyclic phosphate + ethanolamine. In terms of biological role, dermonecrotic toxins cleave the phosphodiester linkage between the phosphate and headgroup of certain phospholipids (sphingolipid and lysolipid substrates), forming an alcohol (often choline) and a cyclic phosphate. This toxin acts on sphingomyelin (SM). It may also act on ceramide phosphoethanolamine (CPE), lysophosphatidylcholine (LPC) and lysophosphatidylethanolamine (LPE), but not on lysophosphatidylserine (LPS), and lysophosphatidylglycerol (LPG). It acts by transphosphatidylation, releasing exclusively cyclic phosphate products as second products. Induces dermonecrosis, hemolysis, increased vascular permeability, edema, inflammatory response, and platelet aggregation. The sequence is that of Dermonecrotic toxin LlSicTox-alphaIV3 from Loxosceles laeta (South American recluse spider).